The following is a 72-amino-acid chain: uncharacterized protein (72 aa).

A helical transmembrane segment spans residues 23–45 (ITNLLITTILLCFFNATTYWKLF).

It localises to the membrane. This is an uncharacterized protein from Schizosaccharomyces pombe (strain 972 / ATCC 24843) (Fission yeast).